Here is a 465-residue protein sequence, read N- to C-terminus: Asparagine--tRNA ligase (465 aa).

Belongs to the class-II aminoacyl-tRNA synthetase family. Homodimer.

It is found in the cytoplasm. It catalyses the reaction tRNA(Asn) + L-asparagine + ATP = L-asparaginyl-tRNA(Asn) + AMP + diphosphate + H(+). In Hahella chejuensis (strain KCTC 2396), this protein is Asparagine--tRNA ligase.